Consider the following 372-residue polypeptide: MPNQHMLLLFNLLPVGSNISTWWNFGSMLLTCLALQTMTGFFLAIHYTANINLSFSSIVHITRDVPYGWMMQNLHAIGASMFFICIYIHIARGLYYGSFLNKNVWLSGTTLLIILMATAFFGYVLPWGQMSFWAATVITNLLTAVPYIGTELTNWLWGGFSINDPTLTRFFALHFILPFTIISMSSIHIMLLHTEGSSNPLGTNSDIDKIPFHPYHSHKDMLMLTIMMTALFIIMSFNPNIFNDPENFSKANPLVTPQHIKPEWYFLFAYGILRSIPNKLGGAVALVLSVTILMTMPFTHTSHMRSMAFRPLMQFMFWTLVTTFIMITWAATKPVEPPFTTIGQVTSILYFTFFIMNPLLGWLENKISITNM.

4 helical membrane-spanning segments follow: residues 25–45 (FGSMLLTCLALQTMTGFFLAI), 69–90 (WMMQNLHAIGASMFFICIYIHI), 105–125 (WLSGTTLLIILMATAFFGYVL), and 170–190 (FFALHFILPFTIISMSSIHIM). The heme b site is built by H75 and H89. Residues H174 and H188 each coordinate heme b. Residue H193 coordinates a ubiquinone. The next 4 helical transmembrane spans lie at 218–238 (HKDMLMLTIMMTALFIIMSFN), 280–300 (LGGAVALVLSVTILMTMPFTH), 312–332 (LMQFMFWTLVTTFIMITWAAT), and 339–358 (FTTIGQVTSILYFTFFIMNP).

Belongs to the cytochrome b family. The cytochrome bc1 complex contains 3 respiratory subunits (MT-CYB, CYC1 and UQCRFS1), 2 core proteins (UQCRC1 and UQCRC2) and probably 6 low-molecular weight proteins. The cofactor is heme b.

The protein resides in the mitochondrion inner membrane. Component of the ubiquinol-cytochrome c reductase complex (complex III or cytochrome b-c1 complex) that is part of the mitochondrial respiratory chain. The b-c1 complex mediates electron transfer from ubiquinol to cytochrome c. Contributes to the generation of a proton gradient across the mitochondrial membrane that is then used for ATP synthesis. The protein is Cytochrome b (MT-CYB) of Pantherophis bairdi (Baird's ratsnake).